The following is a 942-amino-acid chain: Homeobox protein 2 (942 aa).

Composition is skewed to low complexity over residues 32-87 and 98-130; these read ECNE…NINE and SPYSSPSSSISSPSRSPSPNSPASSSPIHSPIP. Disordered regions lie at residues 32-149, 161-494, 537-580, and 609-942; these read ECNE…PQNI, LESP…RLKK, RQEK…QGGA, and FKNN…CQQN. Polar residues predominate over residues 131 to 149; the sequence is NTNFKQSGEYQSIPSPQNI. The span at 163–261 shows a compositional bias: low complexity; that stretch reads SPNSSNSSPS…PSSNLSKSNS (99 aa). A compositionally biased stretch (polar residues) spans 269 to 290; that stretch reads QAPSNTSSPQLLSPNHNQQRIS. Composition is skewed to low complexity over residues 299–430 and 450–464; these read NNNH…NSSP and NNNNNNNNNNNSNSS. Residues 465–481 are compositionally biased toward polar residues; sequence FDEYQPQQKVSRSNSPN. The segment at residues 485–544 is a DNA-binding region (homeobox); the sequence is EKKRRTRLKKEQADILKTFFDNDDYPTKDDKETLANRLGMSYCAVTTWFSNKRQEKKRRG. 6 stretches are compositionally biased toward low complexity: residues 609 to 621, 628 to 685, 694 to 737, 752 to 764, 776 to 864, and 890 to 927; these read FKNNNMDNNNKNV, NNNN…GSSD, NNNN…NNNN, NNNNNNNNNNNNN, SDDT…YLNN, and NNFNGDNNNNNNNKNNNNNNQNNNGNGNNNNNNNNDNN. A coiled-coil region spans residues 835 to 865; it reads NNNNNNNNQNNNNNNNNNQYNNNNKNYLNNI.

It is found in the nucleus. Putative transcription factor that may potentiate the function of warA. The protein is Homeobox protein 2 (hbx2) of Dictyostelium discoideum (Social amoeba).